A 161-amino-acid polypeptide reads, in one-letter code: MPLKIAVYPGSFDPITYGHLDIIERGLRIFDKIIVAVAKNSEKNSLFPTDERIALIKEVLGDSERAEVDTFTGLLVDYVRDQGATVIIRGLRAVSDFEYEFQLAQMNRSITQDIETLFMMTSVPYSYLSSSIVKEVSSLNGPIEGLVPPAVKKALDAKFNR.

S11 lines the substrate pocket. ATP is bound by residues 11–12 and H19; that span reads SF. Residues K43, L75, and R89 each contribute to the substrate site. ATP contacts are provided by residues 90 to 92, E100, and 125 to 131; these read GLR and YSYLSSS.

It belongs to the bacterial CoaD family. Homohexamer. Requires Mg(2+) as cofactor.

The protein localises to the cytoplasm. It catalyses the reaction (R)-4'-phosphopantetheine + ATP + H(+) = 3'-dephospho-CoA + diphosphate. The protein operates within cofactor biosynthesis; coenzyme A biosynthesis; CoA from (R)-pantothenate: step 4/5. Functionally, reversibly transfers an adenylyl group from ATP to 4'-phosphopantetheine, yielding dephospho-CoA (dPCoA) and pyrophosphate. The protein is Phosphopantetheine adenylyltransferase of Geotalea daltonii (strain DSM 22248 / JCM 15807 / FRC-32) (Geobacter daltonii).